The following is a 315-amino-acid chain: Hydrogenase-4 component C (315 aa).

The Periplasmic portion of the chain corresponds to 1 to 10 (MRQTLCDGYL). The chain crosses the membrane as a helical span at residues 11–31 (VIFALAQAVILLMLTPLFTGI). The Cytoplasmic portion of the chain corresponds to 32 to 73 (SRQIRARMHSRRGPGIWQDYRDIHKLFKRQEVAPTSSGLMFR). The helical transmembrane segment at 74 to 94 (LMPWVLISSMLVLAMALPLFI) threads the bilayer. The Periplasmic portion of the chain corresponds to 95–98 (TVSP). Residues 99–119 (FAGGGDLITLIYLLALFRFFF) form a helical membrane-spanning segment. At 120 to 140 (ALSGLDTGSPFAGVGASRELT) the chain is on the cytoplasmic side. A helical membrane pass occupies residues 141-161 (LGILVEPMLILSLLVLALIAG). Topologically, residues 162–181 (STHIEMISNTLAMGWNSPLT) are periplasmic. The chain crosses the membrane as a helical span at residues 182–202 (TVLALLACGFACFIEMGKIPF). Residues 203–228 (DVAEAEQELQEGPLTEYSGAGLALAK) are Cytoplasmic-facing. Residues 229-249 (WGLGLKQVVMASLFVALFLPF) traverse the membrane as a helical segment. Residues 250–256 (GRAQELS) lie on the Periplasmic side of the membrane. A helical transmembrane segment spans residues 257 to 277 (LACLLTSLVVTLLKVLLIFVL). The Cytoplasmic segment spans residues 278 to 289 (ASIAENTLARGR). Residues 290 to 310 (FLLIHHVTWLGFSLAALAWVF) form a helical membrane-spanning segment. The Periplasmic portion of the chain corresponds to 311–315 (WLTGL).

The protein belongs to the complex I subunit 1 family.

The protein resides in the cell inner membrane. Its function is as follows. Possible component of hydrogenase 4. This Escherichia coli (strain K12) protein is Hydrogenase-4 component C.